The primary structure comprises 229 residues: Cytochrome c oxidase subunit 2 (229 aa).

Residues 1-26 (MATWAQFGLQDASSPLMEELTYFHDY) lie on the Mitochondrial intermembrane side of the membrane. The helical transmembrane segment at 27–48 (ALIVLTLITILVFYGLVSLLLS) threads the bilayer. The Mitochondrial matrix segment spans residues 49-62 (SSTNRFFLEGQELE). A helical transmembrane segment spans residues 63-82 (TIWTVVPAFILIFIALPSLQ). Residues 83 to 229 (LLYLMDEVNN…ENWVAQYIEE (147 aa)) are Mitochondrial intermembrane-facing. The Cu cation site is built by His161, Cys196, Glu198, Cys200, His204, and Met207. Glu198 lines the Mg(2+) pocket.

Belongs to the cytochrome c oxidase subunit 2 family. As to quaternary structure, component of the cytochrome c oxidase (complex IV, CIV), a multisubunit enzyme composed of a catalytic core of 3 subunits and several supernumerary subunits. The complex exists as a monomer or a dimer and forms supercomplexes (SCs) in the inner mitochondrial membrane with ubiquinol-cytochrome c oxidoreductase (cytochrome b-c1 complex, complex III, CIII). It depends on Cu cation as a cofactor.

The protein localises to the mitochondrion inner membrane. It catalyses the reaction 4 Fe(II)-[cytochrome c] + O2 + 8 H(+)(in) = 4 Fe(III)-[cytochrome c] + 2 H2O + 4 H(+)(out). Its function is as follows. Component of the cytochrome c oxidase, the last enzyme in the mitochondrial electron transport chain which drives oxidative phosphorylation. The respiratory chain contains 3 multisubunit complexes succinate dehydrogenase (complex II, CII), ubiquinol-cytochrome c oxidoreductase (cytochrome b-c1 complex, complex III, CIII) and cytochrome c oxidase (complex IV, CIV), that cooperate to transfer electrons derived from NADH and succinate to molecular oxygen, creating an electrochemical gradient over the inner membrane that drives transmembrane transport and the ATP synthase. Cytochrome c oxidase is the component of the respiratory chain that catalyzes the reduction of oxygen to water. Electrons originating from reduced cytochrome c in the intermembrane space (IMS) are transferred via the dinuclear copper A center (CU(A)) of subunit 2 and heme A of subunit 1 to the active site in subunit 1, a binuclear center (BNC) formed by heme A3 and copper B (CU(B)). The BNC reduces molecular oxygen to 2 water molecules using 4 electrons from cytochrome c in the IMS and 4 protons from the mitochondrial matrix. The polypeptide is Cytochrome c oxidase subunit 2 (COII) (Paracentrotus lividus (Common sea urchin)).